The primary structure comprises 711 residues: Polyribonucleotide nucleotidyltransferase (711 aa).

2 residues coordinate Mg(2+): Asp490 and Asp496. The 63-residue stretch at 557–619 (PRIETMTIPK…KCIDDAMRII (63 aa)) folds into the KH domain. In terms of domain architecture, S1 motif spans 629-699 (GEVYVGKVRS…KTGKFKLSHK (71 aa)).

It belongs to the polyribonucleotide nucleotidyltransferase family. Mg(2+) serves as cofactor.

It is found in the cytoplasm. The enzyme catalyses RNA(n+1) + phosphate = RNA(n) + a ribonucleoside 5'-diphosphate. Functionally, involved in mRNA degradation. Catalyzes the phosphorolysis of single-stranded polyribonucleotides processively in the 3'- to 5'-direction. This Phocaeicola vulgatus (strain ATCC 8482 / DSM 1447 / JCM 5826 / CCUG 4940 / NBRC 14291 / NCTC 11154) (Bacteroides vulgatus) protein is Polyribonucleotide nucleotidyltransferase.